The sequence spans 525 residues: Protein disulfide-isomerase A2 (525 aa).

Positions 1–21 are cleaved as a signal peptide; the sequence is MSRQLLPVLLLLLLRASCPWG. A Thioredoxin 1 domain is found at 27–152; the sequence is RSPSEEPPEE…IAEWLRRRVG (126 aa). Residues cysteine 71 and cysteine 74 each act as nucleophile in the active site. Cysteine 71 and cysteine 74 form a disulfide bridge. N-linked (GlcNAc...) asparagine glycans are attached at residues asparagine 127 and asparagine 284. Residues 367-496 form the Thioredoxin 2 domain; the sequence is VLNGQVKPYL…FSKFLDNGGV (130 aa). Residues cysteine 418 and cysteine 421 each act as nucleophile in the active site. Cysteine 418 and cysteine 421 are oxidised to a cystine. A disordered region spans residues 492-525; that stretch reads DNGGVLPTEEPPEEPAAPFPEPPANSTMGSKEEL. Over residues 505 to 514 the composition is skewed to pro residues; the sequence is EPAAPFPEPP. N-linked (GlcNAc...) asparagine glycosylation is present at asparagine 516. Over residues 516–525 the composition is skewed to polar residues; that stretch reads NSTMGSKEEL. A Prevents secretion from ER motif is present at residues 522-525; the sequence is KEEL.

Belongs to the protein disulfide isomerase family. Monomer; predominantly as monomer under reducing conditions. Homodimer; disulfide-linked. Part of a large chaperone multiprotein complex comprising DNAJB11, HSP90B1, HSPA5, HYOU, PDIA2, PDIA4, PDIA6, PPIB, SDF2L1, UGGT1 and very small amounts of ERP29, but not, or at very low levels, CALR nor CANX. In terms of processing, the disulfide-linked homodimer exhibits an enhanced chaperone activity. Glycosylated. In terms of tissue distribution, highly expressed in pancreas (at protein level).

The protein resides in the endoplasmic reticulum lumen. It carries out the reaction Catalyzes the rearrangement of -S-S- bonds in proteins.. In terms of biological role, acts as an intracellular estrogen-binding protein. May be involved in modulating cellular levels and biological functions of estrogens in the pancreas. May act as a chaperone that inhibits aggregation of misfolded proteins. The chain is Protein disulfide-isomerase A2 (PDIA2) from Homo sapiens (Human).